A 622-amino-acid polypeptide reads, in one-letter code: Protein lev-9 (622 aa).

A signal peptide spans 1–16; that stretch reads MRFLLLLAISITYASA. Positions 17–61 constitute a WAP; atypical domain; that stretch reads LSCPEVTLSQRPKHCKKECIADEDCKRNKRCMCDGECGLSCVNPI. Disulfide bonds link Cys-19/Cys-49, Cys-35/Cys-47, Cys-41/Cys-57, Cys-64/Cys-105, Cys-91/Cys-118, Cys-124/Cys-171, Cys-154/Cys-188, Cys-193/Cys-233, Cys-219/Cys-246, Cys-251/Cys-291, Cys-277/Cys-304, Cys-309/Cys-349, Cys-335/Cys-362, Cys-366/Cys-409, Cys-395/Cys-420, Cys-425/Cys-467, Cys-452/Cys-481, Cys-486/Cys-543, and Cys-529/Cys-556. Sushi domains are found at residues 62–120, 122–190, 191–248, 249–306, 307–364, 365–422, 423–483, and 484–558; these read AMCH…VCRL, LKCG…RCKA, RACP…NCKA, TECS…RCEE, IRCS…RCLA, SCRV…VCSP, LSCH…KCLP, and SWCE…KCVS. Asn-411 carries an N-linked (GlcNAc...) asparagine glycan. A propeptide spanning residues 576 to 622 is cleaved from the precursor; that stretch reads SLPGRAVREYVDDELSTHRQHSGKCGIVSGKLERMIMQHSDNGVSVC.

Proteolytic processing of the C-terminus is required for clustering activity but not for secretion nor traffic.

It is found in the synapse. It localises to the secreted. Functionally, scaffolding protein that is necessary to cluster acetylcholine receptors at neuromuscular junctions. The polypeptide is Protein lev-9 (lev-9) (Caenorhabditis elegans).